We begin with the raw amino-acid sequence, 733 residues long: Zinc finger transcription factor ace1 (733 aa).

A compositionally biased stretch (basic residues) spans 1–11 (MSFSNPRRRTP). Disordered regions lie at residues 1 to 22 (MSFSNPRRRTPVTRPGTDCEHG), 34 to 63 (GATFHSPTSPSASSAAGDFVPPTLTRSQSA), and 89 to 183 (ASLS…SSTT). Low complexity predominate over residues 39–49 (SPTSPSASSAA). Over residues 132-142 (LRPRSVRRTRN) the composition is skewed to basic residues. The segment covering 148-158 (GIGSSVVSTND) has biased composition (polar residues). Residues 171–183 (ASALTRSAASSTT) are compositionally biased toward low complexity. 3 consecutive C2H2-type zinc fingers follow at residues 400–424 (KKCREPGCTKEFKRPCDLTKHEKTH), 428–456 (WKCPIPTCKYHEYGWPTEKEMDRHINDKH), and 463–488 (YECLFKPCPYKSKRESNCKQHMEKAH). The segment at 497-533 (TNGKKAPSQNGSTAQQTPPLANVSTPSSTPSYSVPTP) is disordered. Polar residues predominate over residues 503 to 515 (PSQNGSTAQQTPP). The segment covering 519–530 (VSTPSSTPSYSV) has biased composition (low complexity).

The protein resides in the nucleus. Binds to the promoter of the cbh1 gene and activates transcription. The protein is Zinc finger transcription factor ace1 (ace1) of Hypocrea jecorina (Trichoderma reesei).